The following is a 521-amino-acid chain: Protein nucleotidyltransferase YdiU (521 aa).

Residues glycine 109, glycine 111, arginine 112, lysine 131, aspartate 143, glycine 144, arginine 194, and arginine 201 each coordinate ATP. Catalysis depends on aspartate 270, which acts as the Proton acceptor. Mg(2+) is bound by residues asparagine 271 and aspartate 280. Residue aspartate 280 participates in ATP binding.

It belongs to the SELO family. It depends on Mg(2+) as a cofactor. The cofactor is Mn(2+).

It carries out the reaction L-seryl-[protein] + ATP = 3-O-(5'-adenylyl)-L-seryl-[protein] + diphosphate. It catalyses the reaction L-threonyl-[protein] + ATP = 3-O-(5'-adenylyl)-L-threonyl-[protein] + diphosphate. The catalysed reaction is L-tyrosyl-[protein] + ATP = O-(5'-adenylyl)-L-tyrosyl-[protein] + diphosphate. The enzyme catalyses L-histidyl-[protein] + UTP = N(tele)-(5'-uridylyl)-L-histidyl-[protein] + diphosphate. It carries out the reaction L-seryl-[protein] + UTP = O-(5'-uridylyl)-L-seryl-[protein] + diphosphate. It catalyses the reaction L-tyrosyl-[protein] + UTP = O-(5'-uridylyl)-L-tyrosyl-[protein] + diphosphate. In terms of biological role, nucleotidyltransferase involved in the post-translational modification of proteins. It can catalyze the addition of adenosine monophosphate (AMP) or uridine monophosphate (UMP) to a protein, resulting in modifications known as AMPylation and UMPylation. The chain is Protein nucleotidyltransferase YdiU from Burkholderia thailandensis (strain ATCC 700388 / DSM 13276 / CCUG 48851 / CIP 106301 / E264).